Consider the following 211-residue polypeptide: Uracil phosphoribosyltransferase (211 aa).

5-phospho-alpha-D-ribose 1-diphosphate contacts are provided by residues Arg-79, Arg-104, and 131 to 139 (DPMLATGGS). Residues Ile-196 and 201–203 (GDA) each bind uracil. Asp-202 is a binding site for 5-phospho-alpha-D-ribose 1-diphosphate.

The protein belongs to the UPRTase family. Mg(2+) is required as a cofactor.

The catalysed reaction is UMP + diphosphate = 5-phospho-alpha-D-ribose 1-diphosphate + uracil. It participates in pyrimidine metabolism; UMP biosynthesis via salvage pathway; UMP from uracil: step 1/1. With respect to regulation, allosterically activated by GTP. Functionally, catalyzes the conversion of uracil and 5-phospho-alpha-D-ribose 1-diphosphate (PRPP) to UMP and diphosphate. In Lactococcus lactis subsp. cremoris (strain SK11), this protein is Uracil phosphoribosyltransferase.